Consider the following 22-residue polypeptide: Brevinin-1OKa (22 aa).

K22 carries the post-translational modification Lysine amide.

As to expression, expressed by the skin glands.

It localises to the secreted. Its function is as follows. Antimicrobial peptide. Active against Gram-negative bacterium E.coli (MIC=12.5 uM) and against Gram-positive bacterium S.aureus (MIC=12.5 uM). This chain is Brevinin-1OKa, found in Nidirana okinavana (Kampira Falls frog).